The chain runs to 355 residues: 3-dehydroquinate synthase (355 aa).

Residues 98 to 102, 122 to 123, Lys135, Lys144, and 162 to 165 each bind NAD(+); these read GVVGD, TT, and TLDT. Positions 177, 240, and 257 each coordinate Zn(2+).

This sequence belongs to the sugar phosphate cyclases superfamily. Dehydroquinate synthase family. Co(2+) is required as a cofactor. Requires Zn(2+) as cofactor. The cofactor is NAD(+).

It localises to the cytoplasm. It catalyses the reaction 7-phospho-2-dehydro-3-deoxy-D-arabino-heptonate = 3-dehydroquinate + phosphate. Its pathway is metabolic intermediate biosynthesis; chorismate biosynthesis; chorismate from D-erythrose 4-phosphate and phosphoenolpyruvate: step 2/7. Its function is as follows. Catalyzes the conversion of 3-deoxy-D-arabino-heptulosonate 7-phosphate (DAHP) to dehydroquinate (DHQ). The polypeptide is 3-dehydroquinate synthase (Dictyoglomus turgidum (strain DSM 6724 / Z-1310)).